Reading from the N-terminus, the 158-residue chain is SsrA-binding protein (158 aa).

This sequence belongs to the SmpB family.

It is found in the cytoplasm. In terms of biological role, required for rescue of stalled ribosomes mediated by trans-translation. Binds to transfer-messenger RNA (tmRNA), required for stable association of tmRNA with ribosomes. tmRNA and SmpB together mimic tRNA shape, replacing the anticodon stem-loop with SmpB. tmRNA is encoded by the ssrA gene; the 2 termini fold to resemble tRNA(Ala) and it encodes a 'tag peptide', a short internal open reading frame. During trans-translation Ala-aminoacylated tmRNA acts like a tRNA, entering the A-site of stalled ribosomes, displacing the stalled mRNA. The ribosome then switches to translate the ORF on the tmRNA; the nascent peptide is terminated with the 'tag peptide' encoded by the tmRNA and targeted for degradation. The ribosome is freed to recommence translation, which seems to be the essential function of trans-translation. In Bartonella quintana (strain Toulouse) (Rochalimaea quintana), this protein is SsrA-binding protein.